The following is a 462-amino-acid chain: Ubiquitin carboxyl-terminal hydrolase calypso (462 aa).

One can recognise a UCH catalytic domain in the interval 29-260; the sequence is GWLELESDPG…IRFNLMAVVP (232 aa). Catalysis depends on Cys115, which acts as the Nucleophile. Catalysis depends on His197, which acts as the Proton donor. The ULD domain occupies 357–385; it reads NYDKFICTFLSMLAHQGVLGELVSQHLLP. Positions 387 to 462 are positively charged C-terminal tail required for binding nucleosomes; the sequence is KKIANRLNRQ…KGRNKCRKRK (76 aa). The span at 413–447 shows a compositional bias: low complexity; the sequence is GTNAAGSKSQQQQQQTQQQPQQTQTAKNGKSPGKT. The tract at residues 413-462 is disordered; that stretch reads GTNAAGSKSQQQQQQTQQQPQQTQTAKNGKSPGKTPGRRRKGRNKCRKRK. The segment covering 448–462 has biased composition (basic residues); that stretch reads PGRRRKGRNKCRKRK.

It belongs to the peptidase C12 family. BAP1 subfamily. In terms of assembly, catalytic component of the polycomb repressive deubiquitinase (PR-DUB) complex, at least composed of caly/calypso, Asx and sba (MBD5/6 homolog). The PR-DUB complex associates with nucleosomes to mediate deubiquitination of histone H2AK118ub1 substrates; the association requires the positively charged C-terminal tail of caly, probably due to direct binding of DNA. Interacts (via ULD domain) with Asx (via DEUBAD domain); the interaction produces a stable heterodimer with a composite binding site for ubiquitin. Homodimerizes (via coiled-coil hinge-region between the UCH and ULD domains) to mediate assembly of 2 copies of the caly-Asx heterodimer into a bisymmetric tetramer; dimerization enhances PR-DUB association with nucleosomes.

Its subcellular location is the nucleus. The catalysed reaction is Thiol-dependent hydrolysis of ester, thioester, amide, peptide and isopeptide bonds formed by the C-terminal Gly of ubiquitin (a 76-residue protein attached to proteins as an intracellular targeting signal).. Functionally, catalytic component of the polycomb repressive deubiquitinase (PR-DUB) complex, a complex that specifically mediates deubiquitination of histone H2A monoubiquitinated at 'Lys-119' (H2AK118ub1). Mediates bisymmetric organization of the PR-DUB complex and is involved in association with nucleosomes to mediate deubiquitination. Does not deubiquitinate monoubiquitinated histone H2B. Required to maintain the transcriptionally repressive state of homeotic genes throughout development. The PR-DUB complex has weak or no activity toward 'Lys-48'- and 'Lys-63'-linked polyubiquitin chains. Polycomb group (PcG) protein. This chain is Ubiquitin carboxyl-terminal hydrolase calypso, found in Drosophila grimshawi (Hawaiian fruit fly).